A 259-amino-acid chain; its full sequence is Peroxisomal membrane protein 11B (259 aa).

Position 43 is an N6-acetyllysine (Lys43). An interaction with PEX19, PEX11G and FIS1 and peroxisome targeting region spans residues 211 to 259 (VVRNACDLFIPLDKLGLWRCGPGIVGLCGLVSSILSILTLIYPWLRLKP). The helical transmembrane segment at 234–254 (IVGLCGLVSSILSILTLIYPW) threads the bilayer.

This sequence belongs to the peroxin-11 family. As to quaternary structure, homodimer. Heterodimer with PEX11G. Interacts with PEX19. Interacts with FIS1.

Its subcellular location is the peroxisome membrane. Functionally, involved in peroxisomal proliferation. May regulate peroxisome division by recruiting the dynamin-related GTPase DNM1L to the peroxisomal membrane. Promotes membrane protrusion and elongation on the peroxisomal surface. The sequence is that of Peroxisomal membrane protein 11B (PEX11B) from Pongo abelii (Sumatran orangutan).